The primary structure comprises 848 residues: Paramyosin (848 aa).

The interval 1–9 (AFGSMSVAD) is nonhelical region. Positions 10–833 (LGSLTRLEDK…HLIRAKHRSS (824 aa)) form a coiled coil. Positions 834–848 (VVTGKNASASKIYVL) are nonhelical region.

This sequence belongs to the paramyosin family. In terms of assembly, homodimer.

It localises to the cytoplasm. Its subcellular location is the myofibril. In terms of biological role, paramyosin is a major structural component of many thick filaments isolated from invertebrate muscles. This Dirofilaria immitis (Canine heartworm) protein is Paramyosin.